Consider the following 271-residue polypeptide: Phosphate import ATP-binding protein PstB 3 (271 aa).

One can recognise an ABC transporter domain in the interval 20–266 (LRVEGLGFYY…PQETQTRDYV (247 aa)). 52 to 59 (GPSGCGKS) is a binding site for ATP.

It belongs to the ABC transporter superfamily. Phosphate importer (TC 3.A.1.7) family. The complex is composed of two ATP-binding proteins (PstB), two transmembrane proteins (PstC and PstA) and a solute-binding protein (PstS).

Its subcellular location is the cell inner membrane. It carries out the reaction phosphate(out) + ATP + H2O = ADP + 2 phosphate(in) + H(+). Its function is as follows. Part of the ABC transporter complex PstSACB involved in phosphate import. Responsible for energy coupling to the transport system. The chain is Phosphate import ATP-binding protein PstB 3 from Synechocystis sp. (strain ATCC 27184 / PCC 6803 / Kazusa).